The sequence spans 677 residues: WD and tetratricopeptide repeats protein 1 (677 aa).

WD repeat units lie at residues 45 to 84 (GHSG…KLLS), 88 to 129 (GHTA…TIHM), 132 to 172 (DHTN…KHSE), 182 to 222 (GQLV…NHRK), and 265 to 305 (RLRV…RPYT). S353 bears the Phosphoserine mark. 2 TPR repeats span residues 362 to 395 (LERV…APHN) and 397 to 432 (MLYG…NPCH). Residues 487-509 (NDGEEKKGPGGGAPVRLRSTSRK) are disordered. S511 is modified (phosphoserine). WD repeat units follow at residues 535–575 (NTTT…LVRV) and 578–617 (GDES…EDLT). Positions 655 to 677 (SSGGAGASDDEDSSEGQVQCRPS) are disordered.

It functions in the pathway protein modification; protein ubiquitination. May function as a substrate receptor for CUL4-DDB1 E3 ubiquitin-protein ligase complex. This Homo sapiens (Human) protein is WD and tetratricopeptide repeats protein 1 (WDTC1).